A 462-amino-acid polypeptide reads, in one-letter code: UDP-N-acetylmuramate--L-alanine ligase (462 aa).

116–122 (GAHGKTT) is an ATP binding site.

It belongs to the MurCDEF family.

It localises to the cytoplasm. The catalysed reaction is UDP-N-acetyl-alpha-D-muramate + L-alanine + ATP = UDP-N-acetyl-alpha-D-muramoyl-L-alanine + ADP + phosphate + H(+). It participates in cell wall biogenesis; peptidoglycan biosynthesis. In terms of biological role, cell wall formation. The protein is UDP-N-acetylmuramate--L-alanine ligase of Desulforamulus reducens (strain ATCC BAA-1160 / DSM 100696 / MI-1) (Desulfotomaculum reducens).